The following is a 575-amino-acid chain: Lysine--tRNA ligase (575 aa).

The Mg(2+) site is built by E412 and E419.

Belongs to the class-II aminoacyl-tRNA synthetase family. In terms of assembly, homodimer. Mg(2+) is required as a cofactor.

It localises to the cytoplasm. The enzyme catalyses tRNA(Lys) + L-lysine + ATP = L-lysyl-tRNA(Lys) + AMP + diphosphate. The sequence is that of Lysine--tRNA ligase from Bacteroides fragilis (strain YCH46).